Reading from the N-terminus, the 112-residue chain is Thyroid transcription factor 1 (112 aa).

The homeobox DNA-binding region spans 1–60; that stretch reads RRNRRVLFSQAQVYELERRFKQQKYLSAPEREHLASMIHLTPTQVKIWFQNHRYKMKRQA. The tract at residues 59 to 100 is disordered; the sequence is QAKDKAAQQQLQQDSGGGGGGGGAGCPQQQQAQQQSPRRVAV. The span at 73–83 shows a compositional bias: gly residues; that stretch reads SGGGGGGGGAG. Residues 84-93 are compositionally biased toward low complexity; sequence CPQQQQAQQQ.

The protein belongs to the NK-2 homeobox family. Phosphorylated on serine residues.

The protein resides in the nucleus. Its function is as follows. Transcription factor that binds and activates the promoter of thyroid specific genes such as thyroglobulin, thyroperoxidase, and thyrotropin receptor. Crucial in the maintenance of the thyroid differentiation phenotype. May play a role in lung development and surfactant homeostasis. In Cavia porcellus (Guinea pig), this protein is Thyroid transcription factor 1 (TITF1).